We begin with the raw amino-acid sequence, 327 residues long: Small ribosomal subunit protein uS4m (327 aa).

An S4 RNA-binding domain is found at 96–154; sequence SRLDMSIHRALFASSALQARQLVLHGKVHVNGKPERRAYRQLLPGDLVTVDQKSVMNCV. Residues 156-173 show a composition bias toward polar residues; the sequence is ASSNNTPSIQDGKQTEQV. Positions 156–199 are disordered; the sequence is ASSNNTPSIQDGKQTEQVSSKDGENEKKKDNDDDLFEQTSNGKL. Residues 174–186 show a composition bias toward basic and acidic residues; it reads SSKDGENEKKKDN.

It belongs to the universal ribosomal protein uS4 family. In terms of assembly, component of the mitochondrial small ribosomal subunit (mt-SSU). Mature yeast 74S mitochondrial ribosomes consist of a small (37S) and a large (54S) subunit. The 37S small subunit contains a 15S ribosomal RNA (15S mt-rRNA) and at least 32 different proteins. The 54S large subunit contains a 21S rRNA (21S mt-rRNA) and at least 45 different proteins. uS3m, uS4m and uS5m form the narrow entry site of the mRNA channel.

Its subcellular location is the mitochondrion. Component of the mitochondrial ribosome (mitoribosome), a dedicated translation machinery responsible for the synthesis of mitochondrial genome-encoded proteins, including at least some of the essential transmembrane subunits of the mitochondrial respiratory chain. The mitoribosomes are attached to the mitochondrial inner membrane and translation products are cotranslationally integrated into the membrane. The sequence is that of Small ribosomal subunit protein uS4m (nam9) from Schizosaccharomyces pombe (strain 972 / ATCC 24843) (Fission yeast).